The primary structure comprises 482 residues: Aspartyl/glutamyl-tRNA(Asn/Gln) amidotransferase subunit B (482 aa).

This sequence belongs to the GatB/GatE family. GatB subfamily. Heterotrimer of A, B and C subunits.

The catalysed reaction is L-glutamyl-tRNA(Gln) + L-glutamine + ATP + H2O = L-glutaminyl-tRNA(Gln) + L-glutamate + ADP + phosphate + H(+). It catalyses the reaction L-aspartyl-tRNA(Asn) + L-glutamine + ATP + H2O = L-asparaginyl-tRNA(Asn) + L-glutamate + ADP + phosphate + 2 H(+). Functionally, allows the formation of correctly charged Asn-tRNA(Asn) or Gln-tRNA(Gln) through the transamidation of misacylated Asp-tRNA(Asn) or Glu-tRNA(Gln) in organisms which lack either or both of asparaginyl-tRNA or glutaminyl-tRNA synthetases. The reaction takes place in the presence of glutamine and ATP through an activated phospho-Asp-tRNA(Asn) or phospho-Glu-tRNA(Gln). This chain is Aspartyl/glutamyl-tRNA(Asn/Gln) amidotransferase subunit B, found in Thermotoga petrophila (strain ATCC BAA-488 / DSM 13995 / JCM 10881 / RKU-1).